A 43-amino-acid chain; its full sequence is Snaclec lebecetin subunit beta (43 aa).

In terms of domain architecture, C-type lectin spans 1–43 (ALNCASGWSGGYDQHCYKVFDIPPSWAADEKFCKQQTSGGHLV). A disulfide bridge links cysteine 4 with cysteine 16.

Heterodimer of subunits alpha and beta; disulfide-linked. Requires Ca(2+) as cofactor. In terms of processing, glycosylated. In terms of tissue distribution, expressed by the venom gland.

Its subcellular location is the secreted. Binds to the platelet GPIb/IX/V receptor system and inhibits ristocetin-induced platelet aggregation in human platelet-rich plasma. Strongly inhibits platelet aggregation induced by ADP, calcium ionophore, thrombin and collagen. Does not inhibit U46619-induced platelet aggregation. The sequence is that of Snaclec lebecetin subunit beta from Macrovipera lebetinus (Levantine viper).